The following is a 101-amino-acid chain: Protein S100-A4 (101 aa).

Ala2 bears the N-acetylalanine mark. 2 consecutive EF-hand domains span residues 12-47 (IVST…SFLG) and 50-85 (TDEA…IAMM). Ca(2+)-binding residues include Lys28 and Glu33. The residue at position 35 (Lys35) is an N6-acetyllysine. Residues Asp63, Asn65, Asp67, Glu69, and Glu74 each coordinate Ca(2+).

It belongs to the S-100 family. As to quaternary structure, homodimer. Interacts with PPFIBP1 in a calcium-dependent mode. Interacts with PGLYRP1; this complex acts as a chemoattractant that promotes lymphocyte movement. Interacts with MYH9; this interaction increases cell motility. Interacts with Annexin 2/ANXA2. Interacts with TP53; this interaction promotes TP53 degradation. Interacts with CCR5 and CXCR3. Interacts with FCGR3A; this interaction inhibits PKC-dependent phosphorylation of FCGR3A.

Its subcellular location is the secreted. It is found in the nucleus. The protein localises to the cytoplasm. Functionally, calcium-binding protein that plays a role in various cellular processes including motility, angiogenesis, cell differentiation, apoptosis, and autophagy. Increases cell motility and invasiveness by interacting with non-muscle myosin heavy chain (NMMHC) IIA/MYH9. Mechanistically, promotes filament depolymerization and increases the amount of soluble myosin-IIA, resulting in the formation of stable protrusions facilitating chemotaxis. Also modulates the pro-apoptotic function of TP53 by binding to its C-terminal transactivation domain within the nucleus and reducing its protein levels. Within the extracellular space, stimulates cytokine production including granulocyte colony-stimulating factor and CCL24 from T-lymphocytes. In addition, stimulates T-lymphocyte chemotaxis by acting as a chemoattractant complex with PGLYRP1 that promotes lymphocyte migration via CCR5 and CXCR3 receptors. In Rattus norvegicus (Rat), this protein is Protein S100-A4 (S100a4).